The following is a 444-amino-acid chain: Deoxyguanosinetriphosphate triphosphohydrolase-like protein (444 aa).

The segment at 1–28 (MTDAVWNERRLGEDKQRRNDHRSPYQRD) is disordered. The HD domain maps to 59–250 (RLTHSLEVSQ…MELADDIAYA (192 aa)).

This sequence belongs to the dGTPase family. Type 2 subfamily.

The chain is Deoxyguanosinetriphosphate triphosphohydrolase-like protein from Shewanella pealeana (strain ATCC 700345 / ANG-SQ1).